We begin with the raw amino-acid sequence, 89 residues long: MNKNEKMVRSLMGTVVSNKMNDTVVVRVERRVKHPKYGKFIKRSTKIHAHDKGNGCQIGDIVTIRECRPISKTKSWTLVKINERAEKVE.

The protein belongs to the universal ribosomal protein uS17 family. Part of the 30S ribosomal subunit.

Its function is as follows. One of the primary rRNA binding proteins, it binds specifically to the 5'-end of 16S ribosomal RNA. The chain is Small ribosomal subunit protein uS17 from Coxiella burnetii (strain Dugway 5J108-111).